The following is a 246-amino-acid chain: Ribonuclease PH (246 aa).

Phosphate contacts are provided by residues Arg-91 and 129-131 (GTR).

The protein belongs to the RNase PH family. Homohexameric ring arranged as a trimer of dimers.

The catalysed reaction is tRNA(n+1) + phosphate = tRNA(n) + a ribonucleoside 5'-diphosphate. In terms of biological role, phosphorolytic 3'-5' exoribonuclease that plays an important role in tRNA 3'-end maturation. Removes nucleotide residues following the 3'-CCA terminus of tRNAs; can also add nucleotides to the ends of RNA molecules by using nucleoside diphosphates as substrates, but this may not be physiologically important. Probably plays a role in initiation of 16S rRNA degradation (leading to ribosome degradation) during starvation. The chain is Ribonuclease PH from Burkholderia orbicola (strain MC0-3).